The chain runs to 201 residues: UPF0056 membrane protein PH0760 (201 aa).

Transmembrane regions (helical) follow at residues 8–28 (FMILYTGMFAITNPIGAVPVF), 49–69 (ITVFITLTVFALVGQWIFKFF), 73–93 (IDAFAIAGGILLFRMGMEMLS), 111–131 (VAVIPLAIPLISGPGAITTVM), 140–160 (GIVILTIIAIGLTTYGILYSG), and 181–201 (LILTSMAMQMIINGIKGAFGI).

The protein belongs to the UPF0056 (MarC) family.

The protein resides in the cell membrane. The sequence is that of UPF0056 membrane protein PH0760 from Pyrococcus horikoshii (strain ATCC 700860 / DSM 12428 / JCM 9974 / NBRC 100139 / OT-3).